We begin with the raw amino-acid sequence, 340 residues long: Cathepsin B (340 aa).

The N-terminal stretch at 1-17 (MSWSRSILCLLGAFANA) is a signal peptide. The propeptide at 18–79 (RSIPYYPPLS…ERVDFAEDMD (62 aa)) is activation peptide. N38 is a glycosylation site (N-linked (GlcNAc...) asparagine). Cystine bridges form between C93-C122, C105-C150, C141-C208, C142-C146, C179-C212, and C187-C198. The active site involves C108. An N-linked (GlcNAc...) asparagine glycan is attached at N192. Active-site residues include H279 and N299.

The protein belongs to the peptidase C1 family. Dimer of a heavy chain and a light chain cross-linked by a disulfide bond.

It localises to the lysosome. It catalyses the reaction Hydrolysis of proteins with broad specificity for peptide bonds. Preferentially cleaves -Arg-Arg-|-Xaa bonds in small molecule substrates (thus differing from cathepsin L). In addition to being an endopeptidase, shows peptidyl-dipeptidase activity, liberating C-terminal dipeptides.. In terms of biological role, thiol protease which is believed to participate in intracellular degradation and turnover of proteins. Has also been implicated in tumor invasion and metastasis. In Gallus gallus (Chicken), this protein is Cathepsin B (CTSB).